The primary structure comprises 63 residues: Cysteine-rich venom protein 3 (63 aa).

A signal peptide spans 1-25 (MRKPITLILVVALALVLLATSEVSA). Disulfide bonds link C29–C43, C36–C48, and C42–C58.

In terms of tissue distribution, expressed by the venom gland.

Its subcellular location is the secreted. This chain is Cysteine-rich venom protein 3, found in Pimpla hypochondriaca (Parasitoid wasp).